The following is a 395-amino-acid chain: Lipoyl synthase, mitochondrial (395 aa).

The N-terminal 14 residues, 1–14 (MISLRSISRSPAVQ), are a transit peptide targeting the mitochondrion. Positions 112, 117, 123, 142, 146, 149, and 357 each coordinate [4Fe-4S] cluster. Positions 127–346 (KKSEATATIM…RDTALQMGFL (220 aa)) constitute a Radical SAM core domain.

This sequence belongs to the radical SAM superfamily. Lipoyl synthase family. [4Fe-4S] cluster is required as a cofactor.

Its subcellular location is the mitochondrion. The catalysed reaction is [[Fe-S] cluster scaffold protein carrying a second [4Fe-4S](2+) cluster] + N(6)-octanoyl-L-lysyl-[protein] + 2 oxidized [2Fe-2S]-[ferredoxin] + 2 S-adenosyl-L-methionine + 4 H(+) = [[Fe-S] cluster scaffold protein] + N(6)-[(R)-dihydrolipoyl]-L-lysyl-[protein] + 4 Fe(3+) + 2 hydrogen sulfide + 2 5'-deoxyadenosine + 2 L-methionine + 2 reduced [2Fe-2S]-[ferredoxin]. It functions in the pathway protein modification; protein lipoylation via endogenous pathway; protein N(6)-(lipoyl)lysine from octanoyl-[acyl-carrier-protein]: step 2/2. In terms of biological role, catalyzes the radical-mediated insertion of two sulfur atoms into the C-6 and C-8 positions of the octanoyl moiety bound to the lipoyl domains of lipoate-dependent enzymes, thereby converting the octanoylated domains into lipoylated derivatives. The polypeptide is Lipoyl synthase, mitochondrial (Debaryomyces hansenii (strain ATCC 36239 / CBS 767 / BCRC 21394 / JCM 1990 / NBRC 0083 / IGC 2968) (Yeast)).